Consider the following 574-residue polypeptide: Bifunctional NAD(P)H-hydrate repair enzyme Nnr (574 aa).

The NAD(P)H-hydrate epimerase stretch occupies residues Met-1–Ala-269. A YjeF N-terminal domain is found at Ile-10–Lys-231. Residues Gly-64 to Asp-68 form an NADPHX 1; for epimerase activity region. K(+) is bound by residues Asn-65 and Asp-123. The tract at residues Gly-127–Gly-133 is NADPHX 1; for epimerase activity. Asp-156 serves as a coordination point for (6S)-NADPHX. Position 159 (Ser-159) interacts with K(+). The region spanning Ile-277–Val-568 is the YjeF C-terminal domain. Residues Ile-277–Val-574 form an ADP-dependent (S)-NAD(P)H-hydrate dehydratase region. Residue Gly-365 coordinates (6S)-NADPHX. Residues His-418–Arg-424 form an NADPHX 2; for dehydratase activity region. Residues Lys-461 to Thr-465 and His-480 to Gly-489 each bind ADP. Asp-490 contributes to the (6S)-NADPHX binding site.

In the N-terminal section; belongs to the NnrE/AIBP family. The protein in the C-terminal section; belongs to the NnrD/CARKD family. It depends on K(+) as a cofactor.

The enzyme catalyses (6S)-NADHX + ADP = AMP + phosphate + NADH + H(+). It catalyses the reaction (6S)-NADPHX + ADP = AMP + phosphate + NADPH + H(+). The catalysed reaction is (6R)-NADHX = (6S)-NADHX. It carries out the reaction (6R)-NADPHX = (6S)-NADPHX. In terms of biological role, bifunctional enzyme that catalyzes the epimerization of the S- and R-forms of NAD(P)HX and the dehydration of the S-form of NAD(P)HX at the expense of ADP, which is converted to AMP. This allows the repair of both epimers of NAD(P)HX, a damaged form of NAD(P)H that is a result of enzymatic or heat-dependent hydration. The polypeptide is Bifunctional NAD(P)H-hydrate repair enzyme Nnr (nnr) (Corynebacterium glutamicum (strain ATCC 13032 / DSM 20300 / JCM 1318 / BCRC 11384 / CCUG 27702 / LMG 3730 / NBRC 12168 / NCIMB 10025 / NRRL B-2784 / 534)).